A 98-amino-acid polypeptide reads, in one-letter code: uncharacterized protein (98 aa).

The protein belongs to the CFAP97 family. In terms of tissue distribution, expressed in a number of tissues including brain, thymus, lung, heart, liver, spleen, kidney and testis.

This is an uncharacterized protein from Mus musculus (Mouse).